Consider the following 1644-residue polypeptide: Terminal uridylyltransferase 4 (1644 aa).

Disordered regions lie at residues 30–60 and 75–277; these read SNQT…KQND and AASV…EMDY. At Ser102 the chain carries Phosphoserine. Residues 108-123 are compositionally biased toward polar residues; sequence KGSSQTKLEKTPSLQT. Ser131 carries the post-translational modification Phosphoserine. Composition is skewed to polar residues over residues 146–156 and 163–174; these read AEATTEKALNS and TPTSQMKLQKTP. Residue Ser176 is modified to Phosphoserine. 2 stretches are compositionally biased toward polar residues: residues 194–209 and 226–242; these read QTES…SSFV and LENS…TDNI. Residues 258–272 are compositionally biased toward basic and acidic residues; the sequence is DLSKMKSEESNKENS. The tract at residues 273–353 is required for interaction with LIN28A and pre-let-7 RNA; that stretch reads SEMDYLENAT…KEKRHKKNIL (81 aa). Cys326, Cys329, His342, and His348 together coordinate Zn(2+). The segment covering 603–623 has biased composition (basic and acidic residues); that stretch reads IADENKAKADEPKDDTKKTET. Residues 603–640 are disordered; it reads IADENKAKADEPKDDTKKTETDNQSNAAKAKHGKSPLT. The region spanning 649–698 is the PAP-associated 1 domain; sequence LGQLWLELLKFYTLDFALEEYVICVRIQDILTRENKNWPKRRIAIEDPFS. 2 disordered regions span residues 733 to 759 and 812 to 841; these read KGGN…VKSD and HGQD…DLTP. The span at 745–755 shows a compositional bias: basic residues; that stretch reads KEKGKLSSKKP. Residues 815 to 827 are compositionally biased toward low complexity; sequence DSSSLSTASGGSD. The span at 828–837 shows a compositional bias: basic and acidic residues; sequence LKQKSAEKQG. Positions 918–1634 are sufficient for monouridylation activity; the sequence is DKFILTSGKP…CATRRCRERC (717 aa). Residues 930 to 947 form a CCHC-type 1 zinc finger; the sequence is IVCSICKKDGHSKNDCPE. UTP is bound by residues 1015–1018, 1025–1028, Asn1098, Lys1120, 1138–1142, and His1254; these read SSKN, SDLD, and SYAYI. Residues Asp1026 and Asp1028 each coordinate Mg(2+). The PAP-associated 2 domain occupies 1201–1254; the sequence is SLGELWLGLLRFYTEEFDFKEYVISIRQKKLLTTFEKQWTSKCIAIEDPFDLNH. Residues 1310–1327 form a CCHC-type 2 zinc finger; sequence RCCRVCGKIGHYMKDCPK. Positions 1329–1350 are disordered; sequence KRLKKKDSEEEKEGNEEEKDSR. The segment at 1358–1375 adopts a CCHC-type 3 zinc-finger fold; that stretch reads LRCFICGDAGHVRRECPE. Low complexity predominate over residues 1402–1427; that stretch reads AGSAQQQSDQSIRTRQSSECSDSPSY. Residues 1402-1483 are disordered; it reads AGSAQQQSDQ…LYNFPQSPPA (82 aa). Positions 1428–1450 are enriched in pro residues; sequence SPQPQPFPQNSPQPSALPPPPSQ. Over residues 1451–1473 the composition is skewed to low complexity; that stretch reads PGSQPKLGPPQQGGQPPHQVQMP. Arg1624 carries the post-translational modification Omega-N-methylarginine.

The protein belongs to the DNA polymerase type-B-like family. Interacts with LIN28A in the presence of pre-let-7 RNA. Interacts with T2BP. Interacts with MOV10; the interaction is RNA-dependent. The cofactor is Mg(2+). Requires Mn(2+) as cofactor. In terms of tissue distribution, ubiquitously expressed.

Its subcellular location is the nucleus. It is found in the cytoplasm. The protein resides in the cytoplasmic ribonucleoprotein granule. It carries out the reaction RNA(n) + UTP = RNA(n)-3'-uridine ribonucleotide + diphosphate. In terms of biological role, uridylyltransferase that mediates the terminal uridylation of mRNAs with short (less than 25 nucleotides) poly(A) tails, hence facilitating global mRNA decay. Essential for both oocyte maturation and fertility. Through 3' terminal uridylation of mRNA, sculpts, with TUT7, the maternal transcriptome by eliminating transcripts during oocyte growth. Involved in microRNA (miRNA)-induced gene silencing through uridylation of deadenylated miRNA targets. Also functions as an integral regulator of microRNA biogenesiS using 3 different uridylation mechanisms. Acts as a suppressor of miRNA biogenesis by mediating the terminal uridylation of some miRNA precursors, including that of let-7 (pre-let-7), miR107, miR-143 and miR-200c. Uridylated miRNAs are not processed by Dicer and undergo degradation. Degradation of pre-let-7 contributes to the maintenance of embryonic stem (ES) cell pluripotency. Also catalyzes the 3' uridylation of miR-26A, a miRNA that targets IL6 transcript. This abrogates the silencing of IL6 transcript, hence promoting cytokine expression. In the absence of LIN28A, TUT7 and TUT4 monouridylate group II pre-miRNAs, which includes most of pre-let7 members, that shapes an optimal 3' end overhang for efficient processing. Add oligo-U tails to truncated pre-miRNAS with a 5' overhang which may promote rapid degradation of non-functional pre-miRNA species. May also suppress Toll-like receptor-induced NF-kappa-B activation via binding to T2BP. Does not play a role in replication-dependent histone mRNA degradation. Due to functional redundancy between TUT4 and TUT7, the identification of the specific role of each of these proteins is difficult. TUT4 and TUT7 restrict retrotransposition of long interspersed element-1 (LINE-1) in cooperation with MOV10 counteracting the RNA chaperonne activity of L1RE1. TUT7 uridylates LINE-1 mRNAs in the cytoplasm which inhibits initiation of reverse transcription once in the nucleus, whereas uridylation by TUT4 destabilizes mRNAs in cytoplasmic ribonucleoprotein granules. This is Terminal uridylyltransferase 4 from Mus musculus (Mouse).